The chain runs to 363 residues: Peptide chain release factor 2 (363 aa).

Gln-251 is modified (N5-methylglutamine).

It belongs to the prokaryotic/mitochondrial release factor family. Post-translationally, methylated by PrmC. Methylation increases the termination efficiency of RF2.

Its subcellular location is the cytoplasm. In terms of biological role, peptide chain release factor 2 directs the termination of translation in response to the peptide chain termination codons UGA and UAA. The protein is Peptide chain release factor 2 (prfB) of Helicobacter pylori (strain J99 / ATCC 700824) (Campylobacter pylori J99).